Here is a 232-residue protein sequence, read N- to C-terminus: 2-C-methyl-D-erythritol 4-phosphate cytidylyltransferase (232 aa).

This sequence belongs to the IspD/TarI cytidylyltransferase family. IspD subfamily.

The catalysed reaction is 2-C-methyl-D-erythritol 4-phosphate + CTP + H(+) = 4-CDP-2-C-methyl-D-erythritol + diphosphate. The protein operates within isoprenoid biosynthesis; isopentenyl diphosphate biosynthesis via DXP pathway; isopentenyl diphosphate from 1-deoxy-D-xylulose 5-phosphate: step 2/6. Functionally, catalyzes the formation of 4-diphosphocytidyl-2-C-methyl-D-erythritol from CTP and 2-C-methyl-D-erythritol 4-phosphate (MEP). This Synechococcus elongatus (strain ATCC 33912 / PCC 7942 / FACHB-805) (Anacystis nidulans R2) protein is 2-C-methyl-D-erythritol 4-phosphate cytidylyltransferase.